A 545-amino-acid polypeptide reads, in one-letter code: Carboxypeptidase Y homolog A (545 aa).

Residues 1–17 (MKSLALALLVGGAIAAG) form the signal peptide. Residues 18–123 (PQQQVLQAPV…KLEAYDLRVK (106 aa)) constitute a propeptide that is removed on maturation. Intrachain disulfides connect cysteine 177/cysteine 416, cysteine 311/cysteine 325, cysteine 335/cysteine 358, cysteine 342/cysteine 351, and cysteine 380/cysteine 386. Asparagine 208 carries an N-linked (GlcNAc...) asparagine glycan. The active site involves serine 264. The active site involves aspartate 455. N-linked (GlcNAc...) asparagine glycans are attached at residues asparagine 485, asparagine 491, and asparagine 506. Histidine 517 is a catalytic residue.

The protein belongs to the peptidase S10 family.

The protein localises to the vacuole. The enzyme catalyses Release of a C-terminal amino acid with broad specificity.. Functionally, vacuolar carboxypeptidase involved in degradation of small peptides. Digests preferentially peptides containing an aliphatic or hydrophobic residue in P1' position, as well as methionine, leucine or phenylalanine in P1 position of ester substrate. This Ajellomyces dermatitidis (strain ER-3 / ATCC MYA-2586) (Blastomyces dermatitidis) protein is Carboxypeptidase Y homolog A (CPYA).